Reading from the N-terminus, the 654-residue chain is DNA-directed RNA polymerase III subunit RPC3 (654 aa).

At threonine 27 the chain carries Phosphothreonine. 2 disordered regions span residues 381–401 (LSRKPSDNKKRSGSNAAASLP) and 422–448 (KSLQESGDTQEEDEEEEDLDADTEDPH). Phosphoserine occurs at positions 392 and 394. Residues 429 to 444 (DTQEEDEEEEDLDADT) are compositionally biased toward acidic residues. The leucine-zipper stretch occupies residues 581–602 (LEWNMANLLFKKEKLKQENSTL).

The protein belongs to the eukaryotic RPC3/POLR3C RNA polymerase subunit family. Component of the RNA polymerase III (Pol III) complex consisting of 17 subunits.

Its subcellular location is the cytoplasm. It localises to the nucleus. In terms of biological role, DNA-dependent RNA polymerase catalyzes the transcription of DNA into RNA using the four ribonucleoside triphosphates as substrates. Specific core component of RNA polymerase III which synthesizes small RNAs, such as 5S rRNA and tRNAs. The polypeptide is DNA-directed RNA polymerase III subunit RPC3 (RPC82) (Saccharomyces cerevisiae (strain ATCC 204508 / S288c) (Baker's yeast)).